The chain runs to 540 residues: GMP synthase [glutamine-hydrolyzing] (540 aa).

Positions 26–216 constitute a Glutamine amidotransferase type-1 domain; it reads IIIILDFGSQ…VYHICECEPT (191 aa). The Nucleophile role is filled by cysteine 103. Residues histidine 190 and glutamate 192 contribute to the active site. The GMPS ATP-PPase domain maps to 217 to 415; sequence WTTAAFVEEA…VGLPEEIVQR (199 aa). 244-250 is an ATP binding site; it reads SGGVDSS.

As to quaternary structure, homodimer.

The enzyme catalyses XMP + L-glutamine + ATP + H2O = GMP + L-glutamate + AMP + diphosphate + 2 H(+). Its pathway is purine metabolism; GMP biosynthesis; GMP from XMP (L-Gln route): step 1/1. In terms of biological role, catalyzes the synthesis of GMP from XMP. In Nostoc sp. (strain PCC 7120 / SAG 25.82 / UTEX 2576), this protein is GMP synthase [glutamine-hydrolyzing].